Reading from the N-terminus, the 241-residue chain is Acyl-protein thioesterase 1 (241 aa).

Catalysis depends on charge relay system residues Ser-122, Asp-178, and His-211.

Belongs to the AB hydrolase superfamily. AB hydrolase 2 family.

Its subcellular location is the cytoplasm. The protein localises to the nucleus. It catalyses the reaction S-hexadecanoyl-L-cysteinyl-[protein] + H2O = L-cysteinyl-[protein] + hexadecanoate + H(+). Hydrolyzes fatty acids from S-acylated cysteine residues in proteins with a strong preference for palmitoylated G-alpha proteins over other acyl substrates. Mediates the deacylation of G-alpha proteins such as GPA1 in vivo, but has weak or no activity toward palmitoylated Ras proteins. Has weak lysophospholipase activity in vitro; however such activity may not exist in vivo. This is Acyl-protein thioesterase 1 from Aspergillus fumigatus (strain ATCC MYA-4609 / CBS 101355 / FGSC A1100 / Af293) (Neosartorya fumigata).